The sequence spans 420 residues: Ribosome biogenesis protein WDR12 homolog (420 aa).

The interval 10-92 is ubiquitin-like (UBL) domain; that stretch reads VQVHLKTKQE…EDAIEIEYVE (83 aa). WD repeat units lie at residues 104-142, 143-185, 192-231, 250-288, 290-329, 335-375, and 379-417; these read LHDDWVSAVKASGKWILSGCYDNTLNLWTNKGKHILTIS, GHTA…NSVE, GHERGVDSVSVSPDGLRFATGSWDTMLKVWSAEQEDAAEG, GHRESVSAVQWMDASTLLTGSWDHTLKVWDLSLEGIKTE, STNKSIFDASYSKLNRLILTASADKNLRLYDPRTNQGSVV, GHNA…APLY, and GHGEKVLDIDWSNPKYIVSGGVDNTVRVFKSRKALAEDT.

Belongs to the WD repeat WDR12/YTM1 family.

It is found in the nucleus. The protein resides in the nucleolus. The protein localises to the nucleoplasm. In terms of biological role, required for maturation of ribosomal RNAs and formation of the large ribosomal subunit. The chain is Ribosome biogenesis protein WDR12 homolog from Drosophila erecta (Fruit fly).